The primary structure comprises 192 residues: Thiol-disulfide oxidoreductase ResA (192 aa).

The chain crosses the membrane as a helical; Signal-anchor for type II membrane protein span at residues 22-41 (SSILLILVAAVVFAIVSNMK). In terms of domain architecture, Thioredoxin spans 47–189 (YRVGDAAPDF…LEGYLNDIAP (143 aa)). Cys-89 and Cys-92 are joined by a disulfide.

This sequence belongs to the thioredoxin family. ResA subfamily.

Its subcellular location is the cell membrane. It participates in protein modification; cytochrome c assembly. Its function is as follows. Thiol-disulfide oxidoreductase which is required in disulfide reduction during c-type cytochrome synthesis. May accept reducing equivalents from CcdA, leading to breakage of disulfide bonds in apocytochrome c; following this reduction heme can be covalently attached. This Oceanobacillus iheyensis (strain DSM 14371 / CIP 107618 / JCM 11309 / KCTC 3954 / HTE831) protein is Thiol-disulfide oxidoreductase ResA.